Consider the following 224-residue polypeptide: ATP-dependent dethiobiotin synthetase BioD (224 aa).

Residue threonine 18 participates in Mg(2+) binding. Residue lysine 39 is part of the active site. Serine 43 is a substrate binding site. Residues aspartate 56 and glutamate 117 each coordinate Mg(2+). ATP is bound by residues aspartate 56, 117–120 (EGVG), and 177–178 (NE).

Belongs to the dethiobiotin synthetase family. Homodimer. It depends on Mg(2+) as a cofactor.

It is found in the cytoplasm. It catalyses the reaction (7R,8S)-7,8-diammoniononanoate + CO2 + ATP = (4R,5S)-dethiobiotin + ADP + phosphate + 3 H(+). It functions in the pathway cofactor biosynthesis; biotin biosynthesis; biotin from 7,8-diaminononanoate: step 1/2. Functionally, catalyzes a mechanistically unusual reaction, the ATP-dependent insertion of CO2 between the N7 and N8 nitrogen atoms of 7,8-diaminopelargonic acid (DAPA, also called 7,8-diammoniononanoate) to form a ureido ring. This Xanthomonas oryzae pv. oryzae (strain MAFF 311018) protein is ATP-dependent dethiobiotin synthetase BioD.